Here is a 329-residue protein sequence, read N- to C-terminus: DNA-directed RNA polymerase subunit alpha (329 aa).

An alpha N-terminal domain (alpha-NTD) region spans residues 1-235 (MQGSVTEFLK…EQLDAFVDLR (235 aa)). Residues 249 to 329 (FDPILLRPVD…NWPPASIAED (81 aa)) form an alpha C-terminal domain (alpha-CTD) region.

This sequence belongs to the RNA polymerase alpha chain family. Homodimer. The RNAP catalytic core consists of 2 alpha, 1 beta, 1 beta' and 1 omega subunit. When a sigma factor is associated with the core the holoenzyme is formed, which can initiate transcription.

It catalyses the reaction RNA(n) + a ribonucleoside 5'-triphosphate = RNA(n+1) + diphosphate. In terms of biological role, DNA-dependent RNA polymerase catalyzes the transcription of DNA into RNA using the four ribonucleoside triphosphates as substrates. The polypeptide is DNA-directed RNA polymerase subunit alpha (Actinobacillus pleuropneumoniae serotype 5b (strain L20)).